A 78-amino-acid chain; its full sequence is NAD(P)H-quinone oxidoreductase subunit O (78 aa).

The protein belongs to the complex I NdhO subunit family. NDH-1 can be composed of about 15 different subunits; different subcomplexes with different compositions have been identified which probably have different functions.

The protein localises to the cellular thylakoid membrane. It catalyses the reaction a plastoquinone + NADH + (n+1) H(+)(in) = a plastoquinol + NAD(+) + n H(+)(out). The enzyme catalyses a plastoquinone + NADPH + (n+1) H(+)(in) = a plastoquinol + NADP(+) + n H(+)(out). Its function is as follows. NDH-1 shuttles electrons from an unknown electron donor, via FMN and iron-sulfur (Fe-S) centers, to quinones in the respiratory and/or the photosynthetic chain. The immediate electron acceptor for the enzyme in this species is believed to be plastoquinone. Couples the redox reaction to proton translocation, and thus conserves the redox energy in a proton gradient. Cyanobacterial NDH-1 also plays a role in inorganic carbon-concentration. In Prochlorococcus marinus (strain MIT 9312), this protein is NAD(P)H-quinone oxidoreductase subunit O.